The sequence spans 210 residues: MKLKFCGFTSIEDVTAASQLPIDAIGFIHYEKSKSHQTITQIKKLASAVPEHIDKVCVVVNPDLTTIEHVLSNTPINTIQLHGTESIDFIQEIKKKYSSIKITKALAADENIIQNINKYKGFVDLFIIDTPSVSYGGTGQTYDWTILKHIKDIPYLIAGGINSENIQTVNQLKLSHQGFDLASGIEVNGRKDIEKMTAIVNIVKGDRENE.

Belongs to the TrpF family.

It catalyses the reaction N-(5-phospho-beta-D-ribosyl)anthranilate = 1-(2-carboxyphenylamino)-1-deoxy-D-ribulose 5-phosphate. It participates in amino-acid biosynthesis; L-tryptophan biosynthesis; L-tryptophan from chorismate: step 3/5. The sequence is that of N-(5'-phosphoribosyl)anthranilate isomerase from Staphylococcus aureus (strain bovine RF122 / ET3-1).